Consider the following 98-residue polypeptide: MADATKNPIADLSESEQLELSKFIESEQQKVKLQQAIHQFTSTCWPKCIGNIGNKLDKSEEQCLQNCVERFLDCNFHIIKRYALEKFGFLFCWLGFSC.

The Twin CX3C motif motif lies at 44 to 67; sequence CWPKCIGNIGNKLDKSEEQCLQNC. 2 disulfides stabilise this stretch: Cys44–Cys67 and Cys48–Cys63.

The protein belongs to the small Tim family. In terms of assembly, heterohexamer; composed of 3 copies of TIM8 and 3 copies of TIM13, named soluble 70 kDa complex. Associates with the TIM22 complex, whose core is composed of TIM22 and TIM54. Interacts with the transmembrane regions of multi-pass transmembrane proteins in transit.

Its subcellular location is the mitochondrion inner membrane. Mitochondrial intermembrane chaperone that participates in the import and insertion of some multi-pass transmembrane proteins into the mitochondrial inner membrane. Also required for the transfer of beta-barrel precursors from the TOM complex to the sorting and assembly machinery (SAM complex) of the outer membrane. Acts as a chaperone-like protein that protects the hydrophobic precursors from aggregation and guide them through the mitochondrial intermembrane space. The TIM8-TIM13 complex is non essential and only mediates the import of few proteins, while the predominant TIM9-TIM10 70 kDa complex is crucial and mediates the import of much more proteins. The chain is Mitochondrial import inner membrane translocase subunit tim8 (tim8) from Schizosaccharomyces pombe (strain 972 / ATCC 24843) (Fission yeast).